A 399-amino-acid chain; its full sequence is S-adenosylmethionine synthase (399 aa).

ATP is bound at residue H17. D19 is a Mg(2+) binding site. E45 provides a ligand contact to K(+). E58 and Q101 together coordinate L-methionine. Residues 101-111 are flexible loop; the sequence is QSADIAMGVDQ. ATP-binding positions include 177-179, 244-245, D253, 259-260, A276, and K280; these read DGK, RF, and RK. D253 contacts L-methionine. An L-methionine-binding site is contributed by K284.

It belongs to the AdoMet synthase family. Homotetramer; dimer of dimers. The cofactor is Mg(2+). K(+) serves as cofactor.

The protein localises to the cytoplasm. The enzyme catalyses L-methionine + ATP + H2O = S-adenosyl-L-methionine + phosphate + diphosphate. The protein operates within amino-acid biosynthesis; S-adenosyl-L-methionine biosynthesis; S-adenosyl-L-methionine from L-methionine: step 1/1. Functionally, catalyzes the formation of S-adenosylmethionine (AdoMet) from methionine and ATP. The overall synthetic reaction is composed of two sequential steps, AdoMet formation and the subsequent tripolyphosphate hydrolysis which occurs prior to release of AdoMet from the enzyme. The sequence is that of S-adenosylmethionine synthase from Bacillus cereus (strain G9842).